The primary structure comprises 311 residues: GTPase Era (311 aa).

Residues 16–188 (HAGFVAIVGK…REQLLEVLPE (173 aa)) enclose the Era-type G domain. The segment at 24–31 (GKPNVGKS) is G1. Position 24-31 (24-31 (GKPNVGKS)) interacts with GTP. The tract at residues 50–54 (QTTRR) is G2. The segment at 71–74 (DTPG) is G3. GTP contacts are provided by residues 71–75 (DTPGL) and 133–136 (NKTD). The G4 stretch occupies residues 133–136 (NKTD). The segment at 166 to 168 (LSA) is G5. In terms of domain architecture, KH type-2 spans 219 to 296 (LRDELPYAVA…YLGLEVIVIP (78 aa)).

This sequence belongs to the TRAFAC class TrmE-Era-EngA-EngB-Septin-like GTPase superfamily. Era GTPase family. In terms of assembly, monomer.

The protein localises to the cytoplasm. It localises to the cell membrane. An essential GTPase that binds both GDP and GTP, with rapid nucleotide exchange. Plays a role in 16S rRNA processing and 30S ribosomal subunit biogenesis and possibly also in cell cycle regulation and energy metabolism. This Deinococcus radiodurans (strain ATCC 13939 / DSM 20539 / JCM 16871 / CCUG 27074 / LMG 4051 / NBRC 15346 / NCIMB 9279 / VKM B-1422 / R1) protein is GTPase Era.